Consider the following 945-residue polypeptide: Poly [ADP-ribose] polymerase 1 (945 aa).

The PARP-type 1 zinc-finger motif lies at 10-96 (YAIEYAKSGR…KLRQEIQHFK (87 aa)). The Zn(2+) site is built by Cys22, Cys25, His54, and Cys57. A PARP-type 2; degenerate zinc finger spans residues 117-183 (IKTEKSLSNR…DYEENFKIKA (67 aa)). Residues 195-251 (RRSTEPATPASASPTPPEAETPVLSAEGSPESSNKRPASSEIIEIDGEGNPDENDFA) are disordered. Over residues 237–248 (IEIDGEGNPDEN) the composition is skewed to acidic residues. A PADR1 zinc-binding domain is found at 258–397 (KEARLMEVQK…NQMSERLYIG (140 aa)). Residues 324–369 (GCPIICQTCSNGKIVYNSSCRTYVCTGYATEYSKCTYESKNPIRTP) form a zinc ribbon region. Residues Cys329, Cys332, Cys348, and Cys358 each contribute to the Zn(2+) site. Positions 464–563 (RCHVFKNEID…KHFRKMPGMF (100 aa)) constitute a WGR domain. The region spanning 586-704 (KTLLPKSVKE…DIKFAYDQIS (119 aa)) is the PARP alpha-helical domain. One can recognise a PARP catalytic domain in the interval 717 to 945 (DPVDINYQKL…RVKMHHARHL (229 aa)).

This sequence belongs to the ARTD/PARP family.

The protein localises to the nucleus. It catalyses the reaction NAD(+) + (ADP-D-ribosyl)n-acceptor = nicotinamide + (ADP-D-ribosyl)n+1-acceptor + H(+).. The enzyme catalyses L-aspartyl-[protein] + NAD(+) = 4-O-(ADP-D-ribosyl)-L-aspartyl-[protein] + nicotinamide. The catalysed reaction is L-glutamyl-[protein] + NAD(+) = 5-O-(ADP-D-ribosyl)-L-glutamyl-[protein] + nicotinamide. Its activity is regulated as follows. Inhibited by N-(6-oxo-5,6-dihydrophenanthridin-2-yl)-N,N-dimethylacetamide HCl (PJ34), 1,5-dihydroxyisoquinoline (DHQ) and 3-aminobenzamide (3AB). Poly[ADP-ribose] polymerase modifies various nuclear proteins by poly(ADP-ribosyl)ation, a post-translational modification synthesized after DNA damage that appears as an obligatory step in a detection/signaling pathway leading to the reparation of DNA strand breaks and programmed cell death. Involved in protection of the genome against mutations. The protein is Poly [ADP-ribose] polymerase 1 of Caenorhabditis elegans.